Here is a 456-residue protein sequence, read N- to C-terminus: ACT domain-containing protein ACR5 (456 aa).

4 consecutive ACT domains span residues valine 39–serine 115, valine 130–arginine 207, isoleucine 271–glycine 347, and lysine 349–glutamine 432.

In terms of tissue distribution, expressed in stems and siliques.

Functionally, may bind amino acids. The protein is ACT domain-containing protein ACR5 of Arabidopsis thaliana (Mouse-ear cress).